Reading from the N-terminus, the 292-residue chain is Cyclin-dependent kinase 5 (292 aa).

The Protein kinase domain occupies 4–286 (YEKLEKIGEG…AEEALQHPYF (283 aa)). Residues 10 to 18 (IGEGTYGTV) and lysine 33 contribute to the ATP site. Tyrosine 15 carries the phosphotyrosine; by ABL1, EPHA4 and FYN modification. Threonine 17 carries the phosphothreonine modification. Lysine 56 bears the N6-acetyllysine mark. Serine 72 bears the Phosphoserine mark. Aspartate 126 acts as the Proton acceptor in catalysis. A Phosphoserine modification is found at serine 159.

The protein belongs to the protein kinase superfamily. CMGC Ser/Thr protein kinase family. CDC2/CDKX subfamily. As to quaternary structure, heterodimer composed of a catalytic subunit CDK5 and a regulatory subunit CDK5R1 (p25) and macromolecular complex composed of at least CDK5, CDK5R1 (p35) and CDK5RAP1 or CDK5RAP2 or CDK5RAP3. Only the heterodimer shows kinase activity. Under neurotoxic stress and neuronal injury conditions, p35 is cleaved by calpain to generate p25 that hyperactivates CDK5, that becomes functionally disabled and often toxic. Found in a trimolecular complex with CABLES1 and ABL1. Interacts with CABLES1 and CABLES2. Interacts with AATK and GSTP1. Binds to HDAC1 when in complex with p25. Interaction with myristoylation p35 promotes CDK5 association with membranes. Both isoforms 1 and 2 interacts with beta-catenin/CTNNB1. Interacts with delta-catenin/CTNND2 and APEX1. Interacts with P53/TP53 in neurons. Interacts with EPHA4; may mediate the activation of NGEF by EPHA4. Interacts with PTK2/FAK1. The complex p35/CDK5 interacts with CLOCK. Interacts with HTR6. Phosphorylation on Tyr-15 by ABL1 and FYN, and on Ser-159 by casein kinase 1 promotes kinase activity. By contrast, phosphorylation at Thr-14 inhibits activity. Post-translationally, phosphorylation at Ser-159 is essential for maximal catalytic activity. Ubiquitously expressed. Accumulates in cortical neurons (at protein level). As to expression, expressed in the testis, skeletal muscle, colon, bone marrow and ovary.

The protein resides in the cytoplasm. Its subcellular location is the nucleus. It localises to the cell membrane. It is found in the perikaryon. The protein localises to the cell projection. The protein resides in the lamellipodium. Its subcellular location is the growth cone. It localises to the postsynaptic density. It is found in the synapse. The catalysed reaction is L-seryl-[protein] + ATP = O-phospho-L-seryl-[protein] + ADP + H(+). It catalyses the reaction L-threonyl-[protein] + ATP = O-phospho-L-threonyl-[protein] + ADP + H(+). With respect to regulation, inhibited by 2-(1-ethyl-2-hydroxyethylamino)-6-benzylamino-9-isopropylpurine (roscovitine), 1-isopropyl-4-aminobenzyl-6-ether-linked benzimidazoles, resveratrol, AT-7519 and olomoucine. Activated by CDK5R1 (p35) and CDK5R2 (p39) during the development of the nervous system; degradation of CDK5R1 (p35) and CDK5R2 (p39) by proteasome result in down regulation of kinase activity, during this process, CDK5 phosphorylates p35 and induces its ubiquitination and subsequent degradation. Kinase activity is mainly determined by the amount of p35 available and subcellular location; reversible association to plasma membrane inhibits activity. Long-term inactivation as well as CDK5R1 (p25)-mediated hyperactivation of CDK5 triggers cell death. The pro-death activity of hyperactivated CDK5 is suppressed by membrane association of CDK5, via myristoylation of p35. Brain-derived neurotrophic factor, glial-derived neurotrophic factor, nerve growth factor (NGF), retinoic acid, laminin and neuregulin promote activity. Neurotoxicity enhances nuclear activity, thus leading to MEF2 phosphorylation and inhibition prior to apoptosis of cortical neurons. Repression by GSTP1 via p25/p35 translocation prevents neurodegeneration. In terms of biological role, proline-directed serine/threonine-protein kinase essential for neuronal cell cycle arrest and differentiation and may be involved in apoptotic cell death in neuronal diseases by triggering abortive cell cycle re-entry. Interacts with D1 and D3-type G1 cyclins. Phosphorylates SRC, NOS3, VIM/vimentin, p35/CDK5R1, MEF2A, SIPA1L1, SH3GLB1, PXN, PAK1, MCAM/MUC18, SEPT5, SYN1, DNM1, AMPH, SYNJ1, CDK16, RAC1, RHOA, CDC42, TONEBP/NFAT5, MAPT/TAU, MAP1B, histone H1, p53/TP53, HDAC1, APEX1, PTK2/FAK1, huntingtin/HTT, ATM, MAP2, NEFH and NEFM. Regulates several neuronal development and physiological processes including neuronal survival, migration and differentiation, axonal and neurite growth, synaptogenesis, oligodendrocyte differentiation, synaptic plasticity and neurotransmission, by phosphorylating key proteins. Negatively regulates the CACNA1B/CAV2.2 -mediated Ca(2+) release probability at hippocampal neuronal soma and synaptic terminals. Activated by interaction with CDK5R1 (p35) and CDK5R2 (p39), especially in postmitotic neurons, and promotes CDK5R1 (p35) expression in an autostimulation loop. Phosphorylates many downstream substrates such as Rho and Ras family small GTPases (e.g. PAK1, RAC1, RHOA, CDC42) or microtubule-binding proteins (e.g. MAPT/TAU, MAP2, MAP1B), and modulates actin dynamics to regulate neurite growth and/or spine morphogenesis. Also phosphorylates exocytosis associated proteins such as MCAM/MUC18, SEPT5, SYN1, and CDK16/PCTAIRE1 as well as endocytosis associated proteins such as DNM1, AMPH and SYNJ1 at synaptic terminals. In the mature central nervous system (CNS), regulates neurotransmitter movements by phosphorylating substrates associated with neurotransmitter release and synapse plasticity; synaptic vesicle exocytosis, vesicles fusion with the presynaptic membrane, and endocytosis. Promotes cell survival by activating anti-apoptotic proteins BCL2 and STAT3, and negatively regulating of JNK3/MAPK10 activity. Phosphorylation of p53/TP53 in response to genotoxic and oxidative stresses enhances its stabilization by preventing ubiquitin ligase-mediated proteasomal degradation, and induces transactivation of p53/TP53 target genes, thus regulating apoptosis. Phosphorylation of p35/CDK5R1 enhances its stabilization by preventing calpain-mediated proteolysis producing p25/CDK5R1 and avoiding ubiquitin ligase-mediated proteasomal degradation. During aberrant cell-cycle activity and DNA damage, p25/CDK5 activity elicits cell-cycle activity and double-strand DNA breaks that precedes neuronal death by deregulating HDAC1. DNA damage triggered phosphorylation of huntingtin/HTT in nuclei of neurons protects neurons against polyglutamine expansion as well as DNA damage mediated toxicity. Phosphorylation of PXN reduces its interaction with PTK2/FAK1 in matrix-cell focal adhesions (MCFA) during oligodendrocytes (OLs) differentiation. Negative regulator of Wnt/beta-catenin signaling pathway. Activator of the GAIT (IFN-gamma-activated inhibitor of translation) pathway, which suppresses expression of a post-transcriptional regulon of proinflammatory genes in myeloid cells; phosphorylates the linker domain of glutamyl-prolyl tRNA synthetase (EPRS) in a IFN-gamma-dependent manner, the initial event in assembly of the GAIT complex. Phosphorylation of SH3GLB1 is required for autophagy induction in starved neurons. Phosphorylation of TONEBP/NFAT5 in response to osmotic stress mediates its rapid nuclear localization. MEF2 is inactivated by phosphorylation in nucleus in response to neurotoxin, thus leading to neuronal apoptosis. APEX1 AP-endodeoxyribonuclease is repressed by phosphorylation, resulting in accumulation of DNA damage and contributing to neuronal death. NOS3 phosphorylation down regulates NOS3-derived nitrite (NO) levels. SRC phosphorylation mediates its ubiquitin-dependent degradation and thus leads to cytoskeletal reorganization. May regulate endothelial cell migration and angiogenesis via the modulation of lamellipodia formation. Involved in dendritic spine morphogenesis by mediating the EFNA1-EPHA4 signaling. The complex p35/CDK5 participates in the regulation of the circadian clock by modulating the function of CLOCK protein: phosphorylates CLOCK at 'Thr-451' and 'Thr-461' and regulates the transcriptional activity of the CLOCK-BMAL1 heterodimer in association with altered stability and subcellular distribution. The chain is Cyclin-dependent kinase 5 from Homo sapiens (Human).